The chain runs to 213 residues: MEGTSESPILDEFEANSNDYDNEFISRFSQNPLHAFSLFTNGNIQEYFMNNSLEKIIIHIVLIIISLCGIKAQTSKIIYIVRLLFWKMYNVINNLVNKMINREKIADRQIVDNRFREFEERFRILLLQHDENIAKQDNIVQYNKLDNFAESIKSEFNLKVAEMERRFQELKWRCDMIANKTMNTIVLTNTVDSTNKDEKIIFDEGSVVQYNRE.

Residues 1–51 (MEGTSESPILDEFEANSNDYDNEFISRFSQNPLHAFSLFTNGNIQEYFMNN) lie on the Lumenal side of the membrane. A glycan (N-linked (GlcNAc...) asparagine; by host) is linked at N50. A helical; Signal-anchor for type III membrane protein membrane pass occupies residues 52–74 (SLEKIIIHIVLIIISLCGIKAQT). The Cytoplasmic segment spans residues 75–213 (SKIIYIVRLL…EGSVVQYNRE (139 aa)).

It belongs to the rotavirus NSP4 family. As to quaternary structure, homotetramer. Interacts with the immature particle in the viroplasm. Interacts with host CAV1, early and late in infection. Interacts with host integrin ITGA1/ITGB1 heterodimer. Interacts with host integrin ITGA2/ITGB1 heterodimer. Interaction with microtubules blocks trafficking to the Golgi apparatus. In terms of processing, the N-glycosyl content is primarily Man(9)GlcNAc, with a small amount of Man(8)GlcNAc.

The protein localises to the host rough endoplasmic reticulum membrane. It is found in the host membrane. The protein resides in the host caveola. It localises to the secreted. Plays an essential role in the virus replication cycle by acting as a viroporin. Creates a pore in the host endoplasmic reticulum and as a consequence releases Ca(2+) in the cytoplasm of infected cell. In turn, high levels of cytoplasmic calcium trigger membrane trafficking and transport of viral ER-associated proteins to viroplasms, sites of viral genome replication and immature particle assembly. Functionally, the secreted form acts as an enterotoxin that causes phospholipase C-dependent elevation of the intracellular calcium concentration in host intestinal mucosa cells. Increased concentration of intracellular calcium disrupts the cytoskeleton and the tight junctions, raising the paracellular permeability. Potentiates chloride ion secretion through a calcium ion-dependent signaling pathway, inducing age-dependent diarrhea. To perform this enterotoxigenic role in vivo, NSP4 is released from infected enterocytes in a soluble form capable of diffusing within the intestinal lumen and interacting with host plasma membrane receptors on neighboring epithelial cells such as integrins ITGA1/ITGB1 and ITGA2/ITGB1. The chain is Non-structural glycoprotein 4 from Homo sapiens (Human).